We begin with the raw amino-acid sequence, 250 residues long: Peptidyl-tRNA hydrolase (250 aa).

Residue Tyr14 participates in tRNA binding. His19 (proton acceptor) is an active-site residue. TRNA contacts are provided by Phe64, Asn66, and Asn112. Residues 192–250 are disordered; it reads MGDGNQRPGGVKTDPAQLEKAPPKAQSHIRQARQNQKKPNIPESGPMAEMLKKLLGKKD. Over residues 219–229 the composition is skewed to polar residues; that stretch reads HIRQARQNQKK. Residues 241-250 show a composition bias toward basic and acidic residues; sequence MLKKLLGKKD.

Belongs to the PTH family. In terms of assembly, monomer.

The protein resides in the cytoplasm. The catalysed reaction is an N-acyl-L-alpha-aminoacyl-tRNA + H2O = an N-acyl-L-amino acid + a tRNA + H(+). In terms of biological role, hydrolyzes ribosome-free peptidyl-tRNAs (with 1 or more amino acids incorporated), which drop off the ribosome during protein synthesis, or as a result of ribosome stalling. Catalyzes the release of premature peptidyl moieties from peptidyl-tRNA molecules trapped in stalled 50S ribosomal subunits, and thus maintains levels of free tRNAs and 50S ribosomes. This chain is Peptidyl-tRNA hydrolase, found in Brucella canis (strain ATCC 23365 / NCTC 10854 / RM-666).